Reading from the N-terminus, the 176-residue chain is Transcription factor E (176 aa).

Residues 5 to 89 (IDQLMKDMAR…YWKANVDQIN (85 aa)) form the HTH TFE/IIEalpha-type domain.

The protein belongs to the TFE family. As to quaternary structure, monomer. Interaction with RNA polymerase subunits RpoF and RpoE is necessary for Tfe stimulatory transcription activity. Able to interact with Tbp and RNA polymerase in the absence of DNA promoter. Interacts both with the preinitiation and elongation complexes.

Functionally, transcription factor that plays a role in the activation of archaeal genes transcribed by RNA polymerase. Facilitates transcription initiation by enhancing TATA-box recognition by TATA-box-binding protein (Tbp), and transcription factor B (Tfb) and RNA polymerase recruitment. Not absolutely required for transcription in vitro, but particularly important in cases where Tbp or Tfb function is not optimal. It dynamically alters the nucleic acid-binding properties of RNA polymerases by stabilizing the initiation complex and destabilizing elongation complexes. Seems to translocate with the RNA polymerase following initiation and acts by binding to the non template strand of the transcription bubble in elongation complexes. The sequence is that of Transcription factor E from Metallosphaera sedula (strain ATCC 51363 / DSM 5348 / JCM 9185 / NBRC 15509 / TH2).